The sequence spans 115 residues: MKVIAAFLLAKLGGNENPTSNDLKKILESVGAEIDETKIDLLFSLIKDHDVTELIAAGREKMSALSSGGPAVAMVAGGGGGGAASAAEPVAESKKKVEEVKDESSDDAGMMGLFD.

The segment at 78–115 (GGGGGAASAAEPVAESKKKVEEVKDESSDDAGMMGLFD) is disordered. Basic and acidic residues predominate over residues 91-103 (AESKKKVEEVKDE). Residues Ser-104 and Ser-105 each carry the phosphoserine modification.

It belongs to the eukaryotic ribosomal protein P1/P2 family. As to quaternary structure, P1 and P2 exist as dimers at the large ribosomal subunit.

Its function is as follows. Plays an important role in the elongation step of protein synthesis. The sequence is that of Large ribosomal subunit protein P2x (RPP2C) from Arabidopsis thaliana (Mouse-ear cress).